The following is a 469-amino-acid chain: GTPase Der (469 aa).

EngA-type G domains are found at residues 3–167 (PTLV…PEEE) and 176–349 (PKIA…AAAF). GTP is bound by residues 9–16 (GRPNVGKS), 56–60 (DTGGL), 119–122 (NKAE), 182–189 (GRPNVGKS), 229–233 (DTAGV), and 294–297 (NKWD). The region spanning 350–436 (IKLSTPKLTR…RIQIKEDEGK (87 aa)) is the KH-like domain. The segment covering 432 to 443 (EDEGKNPFEGKK) has biased composition (basic and acidic residues). The tract at residues 432 to 469 (EDEGKNPFEGKKRAPLSESEATRMRRKKRVRRKVYGAD) is disordered. Residues 455–469 (MRRKKRVRRKVYGAD) are compositionally biased toward basic residues.

Belongs to the TRAFAC class TrmE-Era-EngA-EngB-Septin-like GTPase superfamily. EngA (Der) GTPase family. As to quaternary structure, associates with the 50S ribosomal subunit.

Functionally, GTPase that plays an essential role in the late steps of ribosome biogenesis. The protein is GTPase Der of Thiobacillus denitrificans (strain ATCC 25259 / T1).